Consider the following 237-residue polypeptide: Probable GTP-binding protein EngB (237 aa).

An EngB-type G domain is found at Ala23–Leu209. GTP-binding positions include Gly31–Ser38, Gly58–His62, Asp82–Gly85, Thr149–Asp152, and Leu187–Ser190. Mg(2+) contacts are provided by Ser38 and Thr60. The interval Lys214 to Ala237 is disordered. The span at Pro227–Ala237 shows a compositional bias: pro residues.

This sequence belongs to the TRAFAC class TrmE-Era-EngA-EngB-Septin-like GTPase superfamily. EngB GTPase family. It depends on Mg(2+) as a cofactor.

Functionally, necessary for normal cell division and for the maintenance of normal septation. The chain is Probable GTP-binding protein EngB from Cupriavidus taiwanensis (strain DSM 17343 / BCRC 17206 / CCUG 44338 / CIP 107171 / LMG 19424 / R1) (Ralstonia taiwanensis (strain LMG 19424)).